Reading from the N-terminus, the 473-residue chain is 6-phosphogluconate dehydrogenase, decarboxylating (473 aa).

NADP(+) is bound by residues 10 to 15, 33 to 35, 74 to 76, and Asn-102; these read GMAVMG, NRT, and VKS. Substrate-binding positions include Asn-102 and 128 to 130; that span reads SGG. Residue Lys-182 is the Proton acceptor of the active site. 185 to 186 contributes to the substrate binding site; it reads HN. Glu-189 acts as the Proton donor in catalysis. Positions 190, 260, 287, 446, and 452 each coordinate substrate.

This sequence belongs to the 6-phosphogluconate dehydrogenase family. Homodimer.

It catalyses the reaction 6-phospho-D-gluconate + NADP(+) = D-ribulose 5-phosphate + CO2 + NADPH. It participates in carbohydrate degradation; pentose phosphate pathway; D-ribulose 5-phosphate from D-glucose 6-phosphate (oxidative stage): step 3/3. In terms of biological role, catalyzes the oxidative decarboxylation of 6-phosphogluconate to ribulose 5-phosphate and CO(2), with concomitant reduction of NADP to NADPH. The chain is 6-phosphogluconate dehydrogenase, decarboxylating (gnd) from Buchnera aphidicola subsp. Schizaphis graminum (strain Sg).